Reading from the N-terminus, the 177-residue chain is MSIEVSNESGIDVSEEELISVARFVIEKMNVNPAAELSMVLLDTSSMADLHMRWMDLPGPTDVMSFPMDELEPGGRPDAPEPGPAMLGDIVLCPEFAAKQAETAGHSLGHELALLTVHGVLHLLGYDHAEPDEEKEMFALQRELLEEWVAHQVEAYHLDRQTERDRRLLDKSRYFDE.

Zn(2+) contacts are provided by histidine 118, histidine 122, and histidine 128.

This sequence belongs to the endoribonuclease YbeY family. Requires Zn(2+) as cofactor.

Its subcellular location is the cytoplasm. In terms of biological role, single strand-specific metallo-endoribonuclease involved in late-stage 70S ribosome quality control and in maturation of the 3' terminus of the 16S rRNA. This is Endoribonuclease YbeY from Mycobacterium sp. (strain JLS).